We begin with the raw amino-acid sequence, 898 residues long: Protein translocase subunit SecA (898 aa).

Residues Q87, 105–109 (GEGKT), and D512 contribute to the ATP site. Residues 855–865 (MQYQNNEGTSS) show a composition bias toward polar residues. A disordered region spans residues 855-898 (MQYQNNEGTSSLHEKSEHKIGRNESCPCGSGKKYKHCHGSKAKY). A compositionally biased stretch (basic and acidic residues) spans 866-876 (LHEKSEHKIGR). The Zn(2+) site is built by C880, C882, C891, and H892. Residues 886-898 (KKYKHCHGSKAKY) are compositionally biased toward basic residues.

It belongs to the SecA family. Monomer and homodimer. Part of the essential Sec protein translocation apparatus which comprises SecA, SecYEG and auxiliary proteins SecDF-YajC and YidC. Zn(2+) is required as a cofactor.

Its subcellular location is the cell inner membrane. It is found in the cytoplasm. The catalysed reaction is ATP + H2O + cellular proteinSide 1 = ADP + phosphate + cellular proteinSide 2.. Part of the Sec protein translocase complex. Interacts with the SecYEG preprotein conducting channel. Has a central role in coupling the hydrolysis of ATP to the transfer of proteins into and across the cell membrane, serving both as a receptor for the preprotein-SecB complex and as an ATP-driven molecular motor driving the stepwise translocation of polypeptide chains across the membrane. The sequence is that of Protein translocase subunit SecA from Histophilus somni (strain 129Pt) (Haemophilus somnus).